A 329-amino-acid polypeptide reads, in one-letter code: COP9 signalosome complex subunit 6 (329 aa).

Positions 44 to 175 (TRVKAQAACS…VTIYESELHV (132 aa)) constitute an MPN domain.

This sequence belongs to the peptidase M67A family. CSN6 subfamily. In terms of assembly, component of the CSN complex, probably composed of CSN1, CSN2, CSN3, CSN4, CSN5, CSN6, CSN7 and CSN8.

In terms of biological role, component of the COP9 signalosome complex (CSN), a complex involved in various cellular and developmental processes such as photomorphogenesis and response to hormones. The CSN complex is an essential regulator of the ubiquitin (Ubl) conjugation pathway by mediating the deneddylation of the cullin subunits of SCF-type E3 ligase complexes, leading to decrease the Ubl ligase activity of SCF. Involved in early response to iron deficiency. The polypeptide is COP9 signalosome complex subunit 6 (Oryza sativa subsp. japonica (Rice)).